Consider the following 304-residue polypeptide: Recombination-associated protein RdgC (304 aa).

This sequence belongs to the RdgC family.

It localises to the cytoplasm. The protein localises to the nucleoid. May be involved in recombination. This Shewanella putrefaciens (strain CN-32 / ATCC BAA-453) protein is Recombination-associated protein RdgC.